Here is a 100-residue protein sequence, read N- to C-terminus: Urease subunit gamma (100 aa).

The protein belongs to the urease gamma subunit family. As to quaternary structure, heterotrimer of UreA (gamma), UreB (beta) and UreC (alpha) subunits. Three heterotrimers associate to form the active enzyme.

The protein resides in the cytoplasm. It carries out the reaction urea + 2 H2O + H(+) = hydrogencarbonate + 2 NH4(+). Its pathway is nitrogen metabolism; urea degradation; CO(2) and NH(3) from urea (urease route): step 1/1. In Klebsiella pneumoniae, this protein is Urease subunit gamma.